The primary structure comprises 310 residues: Protein DOS2 (310 aa).

2 stretches are compositionally biased toward basic and acidic residues: residues 15–26 (DKISNSHTKETG) and 135–146 (SNDKDENSKENE). Disordered regions lie at residues 15–45 (DKIS…KTNE) and 131–151 (AEND…AVGG). Residues 176–228 (QLDPFDVDEKTEEICSILQGDKDISKLMNDIVPHKISYKDFWHIYFLQRNKIL) form the BSD domain. The tract at residues 240–310 (KKEKETEEKE…KDDDDDDDWE (71 aa)) is disordered. The span at 247–263 (EKEVEWDDEEEEEDDDK) shows a compositional bias: acidic residues. Basic and acidic residues-rich tracts occupy residues 264–276 (VEAV…KGET) and 284–300 (GLKD…KDES). Acidic residues predominate over residues 301-310 (KDDDDDDDWE).

Acts in ubiquitin metabolism and is necessary for the control of single-copy DNA replication. The sequence is that of Protein DOS2 (DOS2) from Saccharomyces cerevisiae (strain ATCC 204508 / S288c) (Baker's yeast).